Consider the following 361-residue polypeptide: Hsc70-interacting protein (361 aa).

The segment at 39-98 (GGTIPPAPASTSTDETSKGKAEEQPEEPVKSPEPESEESDLEIDNEGVIEPDNDDPQEMG) is disordered. Basic and acidic residues predominate over residues 53–71 (ETSKGKAEEQPEEPVKSPE). Residues 72 to 98 (PESEESDLEIDNEGVIEPDNDDPQEMG) show a composition bias toward acidic residues. TPR repeat units follow at residues 112-145 (ANEK…NPCL), 147-179 (ILYA…NPDS), and 181-213 (QTYK…DYDE). Residues 254–270 (KAREEHERAQREEEARR) show a composition bias toward basic and acidic residues. The disordered stretch occupies residues 254–292 (KAREEHERAQREEEARRQAGGAQFGGFPGGFPGGFPGAM). The segment covering 275–292 (AQFGGFPGGFPGGFPGAM) has biased composition (gly residues). The STI1 domain occupies 311-350 (DPEVLAAMQDPEVMAAFQDVAQNPANMSKYQNNPKVMSLI).

It belongs to the FAM10 family. As to quaternary structure, homotetramer. Interacts with HSC70 as well as DNAJ homologs and HSP90.

It is found in the cytoplasm. In terms of biological role, one HIP oligomer binds the ATPase domains of at least two HSC70 molecules dependent on activation of the HSC70 ATPase by HSP40. Stabilizes the ADP state of HSC70 that has a high affinity for substrate protein. Through its own chaperone activity, it may contribute to the interaction of HSC70 with various target proteins. This Gallus gallus (Chicken) protein is Hsc70-interacting protein (ST13).